We begin with the raw amino-acid sequence, 294 residues long: S-methyl-5'-thioadenosine phosphorylase (294 aa).

Residues Ser-16, 58-59 (RH), and 91-92 (SA) contribute to the phosphate site. Substrate is bound at residue Met-189. Thr-190 is a phosphate binding site. Substrate is bound at residue 213 to 215 (DFD).

The protein belongs to the PNP/MTAP phosphorylase family. MTAP subfamily. As to quaternary structure, homohexamer. Dimer of a homotrimer.

The enzyme catalyses S-methyl-5'-thioadenosine + phosphate = 5-(methylsulfanyl)-alpha-D-ribose 1-phosphate + adenine. It catalyses the reaction 5'-deoxyadenosine + phosphate = 5-deoxy-alpha-D-ribose 1-phosphate + adenine. The protein operates within amino-acid biosynthesis; L-methionine biosynthesis via salvage pathway; S-methyl-5-thio-alpha-D-ribose 1-phosphate from S-methyl-5'-thioadenosine (phosphorylase route): step 1/1. Catalyzes the reversible phosphorylation of S-methyl-5'-thioadenosine (MTA) to adenine and 5-methylthioribose-1-phosphate. Involved in the breakdown of MTA, a major by-product of polyamine biosynthesis. Responsible for the first step in the methionine salvage pathway after MTA has been generated from S-adenosylmethionine. Has broad substrate specificity with 6-aminopurine nucleosides as preferred substrates. Also catalyzes the phosphorylation of 5'-deoxyadenosine (5'dAdo) to 5-deoxyribose 1-phosphate. Part of a bifunctional DHAP-shunt salvage pathway for SAM by-products. The sequence is that of S-methyl-5'-thioadenosine phosphorylase from Rhodospirillum rubrum (strain ATCC 11170 / ATH 1.1.1 / DSM 467 / LMG 4362 / NCIMB 8255 / S1).